We begin with the raw amino-acid sequence, 277 residues long: S-formylglutathione hydrolase FrmB (277 aa).

Active-site charge relay system residues include Ser145, Asp221, and His254.

This sequence belongs to the esterase D family.

It carries out the reaction S-formylglutathione + H2O = formate + glutathione + H(+). Serine hydrolase involved in the detoxification of formaldehyde. Hydrolyzes S-formylglutathione to glutathione and formate. The sequence is that of S-formylglutathione hydrolase FrmB (frmB) from Escherichia coli O1:K1 / APEC.